Reading from the N-terminus, the 346-residue chain is N-acetyl-gamma-glutamyl-phosphate reductase (346 aa).

The active site involves C149.

Belongs to the NAGSA dehydrogenase family. Type 1 subfamily.

The protein resides in the cytoplasm. It catalyses the reaction N-acetyl-L-glutamate 5-semialdehyde + phosphate + NADP(+) = N-acetyl-L-glutamyl 5-phosphate + NADPH + H(+). Its pathway is amino-acid biosynthesis; L-arginine biosynthesis; N(2)-acetyl-L-ornithine from L-glutamate: step 3/4. Catalyzes the NADPH-dependent reduction of N-acetyl-5-glutamyl phosphate to yield N-acetyl-L-glutamate 5-semialdehyde. In Micrococcus luteus (strain ATCC 4698 / DSM 20030 / JCM 1464 / CCM 169 / CCUG 5858 / IAM 1056 / NBRC 3333 / NCIMB 9278 / NCTC 2665 / VKM Ac-2230) (Micrococcus lysodeikticus), this protein is N-acetyl-gamma-glutamyl-phosphate reductase.